The following is a 1436-amino-acid chain: MWSLTANEDESTTAHFFLGAGDEGLGTCGIGMRTEESDSELLEDEEDEVPPEPQIIVGICAMTKKSKSKPMTQILERLCRFDYLTVVILGEDVILNEPVENWPSCHCLISFHSKGFPLDKAVAYSKLRNPFLINDLAMQYYIQDRREVYRILQEEGIDLPRYAVLNRDPACPEECSLIEGEDQVEVNGAVFPKPFVEKPVSAEDHNVYIYYPSSAGGGSQRLFRKIGSRSSVYSPESSVRKTGSYIYEEFMPTDGTDVKVYTVGPDYAHAEARKSPALDGKVERDSEGKEVRYPVMLTAMEKLVARKVCVAFKQTVCGFDLLRANGHSFVCDVNGFSFVKNSMKYYDDCAKILGNTIMRELAPQFQIPWSIPTEAEDIPIVPTTSGTMMELRCVIAIIRHGDRTPKQKMKMEVTHPRFFALFEKHGGYKTGKLKLKRPEQLQEVLDITRLLLAELEKEPEAEIEEKTGKLEQLKSVLEMYGHFSGINRKVQLTYYPHGVKASNEGQDLQREPLAPSLLLVLKWGGELTPDGRVQAEELGRAFRCMYPGGQGDYAGFPGCGLLRLHSTFRHDLKIYASDEGRVQMTAAAFAKGLLALEGELTPILVQMVKSANMNGLLDSDSDSLSSCQHRVKARLHHILQQDAPFGPEDYDQLAPTGSTSLLNSMSVIQNPVKVCDQVFALIENLTHQIRERMQDPSSVDLQLYHSETLELMLQRWSKLERDFRQKSGRYDISKIPDIYDCVKYDVQHNGSLGLQGTAELLRLSKALADVVIPQEYGISREEKVEIAVGFCLPLLRKILLDLQRTHEDESVNKLHPLYSRGVLSPGRHVRTRLYFTSESHVHSLLSVFRYGGLLDETQDAQWQRALAYLSAISELNYMTQIVIMLYEDNTRDPLSEERFHVELHFSPGVKGVEEGSAPAGCGFRPASSENEEMKTDPGSIENLCPGKASDEPDRALQTSPQPVEGTGLPRRSPLIRNRKAGSMEVLSETSSSRPGGYRLFSSSRPPTEMKQSGLGSQCTGLFSTTVLGGSSSAPNLQDYARTHGKKLPPASLKHRDELLFVPAVKRFSVSFAKHPTNGFEGCSMVPTIYPLETLHNALSLRQVSEFLTKVCQRHTDAHAQASAALFDSMHNHQASDSPFSPPRTLHSPPLQLRHRSEKPPWYSSGPSSTVSSAGPSSPTTVDGNSHFGFSDQSSVNIHMTEEKQGFGLLQETPGDGTRELHIERQQELVEPAQSPQELPVEICPSGSQGVTKVSQTCQEVPDIVQPCHNIHEEIGQPQQEVPDISQLLLKDHDTTTNTCHLCQASQLSQKVCEEICQLCQDNHEESNQLCQEVSVKLGRMVHGFPVNVDSTAQETLMEIGRPTQEIPEDPYQEFSVKVGVLAQKAPAISELSQDIPEADKPSQELSEETELQAQEVSEEIDQESEVVDELPPEAIS.

Residue 64 to 65 (KK) participates in substrate binding. Residues arginine 145, lysine 198, histidine 205, arginine 224, 248 to 251 (EEFM), and 257 to 259 (DVK) contribute to the ATP site. Position 224–225 (224–225 (RK)) interacts with substrate. Lysine 259 and arginine 273 together coordinate substrate. ATP contacts are provided by residues serine 275, aspartate 320, and 332 to 334 (DVN). Residue 337–340 (SFVK) participates in substrate binding. The tract at residues 382–453 (PTTSGTMMEL…VLDITRLLLA (72 aa)) is polyphosphoinositide-binding domain. Positions 915–998 (GSAPAGCGFR…TSSSRPGGYR (84 aa)) are disordered. Phosphoserine occurs at positions 939, 982, 1032, 1068, 1140, and 1147. Disordered regions lie at residues 1131-1191 (NHQA…GFSD) and 1389-1436 (SELS…EAIS). The segment covering 1163-1181 (SSGPSSTVSSAGPSSPTTV) has biased composition (low complexity). Positions 1405 to 1436 (LSEETELQAQEVSEEIDQESEVVDELPPEAIS) are enriched in acidic residues.

The protein belongs to the histidine acid phosphatase family. VIP1 subfamily.

The protein resides in the cytoplasm. It localises to the cytosol. Its subcellular location is the cell membrane. It carries out the reaction 1D-myo-inositol hexakisphosphate + ATP = 1-diphospho-1D-myo-inositol 2,3,4,5,6-pentakisphosphate + ADP. The enzyme catalyses 5-diphospho-1D-myo-inositol 1,2,3,4,6-pentakisphosphate + ATP + H(+) = 1,5-bis(diphospho)-1D-myo-inositol 2,3,4,6-tetrakisphosphate + ADP. Its function is as follows. Bifunctional inositol kinase that acts in concert with the IP6K kinases IP6K1, IP6K2 and IP6K3 to synthesize the diphosphate group-containing inositol pyrophosphates diphosphoinositol pentakisphosphate, PP-InsP5, and bis-diphosphoinositol tetrakisphosphate, (PP)2-InsP4. PP-InsP5 and (PP)2-InsP4, also respectively called InsP7 and InsP8, regulate a variety of cellular processes, including apoptosis, vesicle trafficking, cytoskeletal dynamics, exocytosis, insulin signaling and neutrophil activation. Phosphorylates inositol hexakisphosphate (InsP6) at position 1 to produce PP-InsP5 which is in turn phosphorylated by IP6Ks to produce (PP)2-InsP4. Alternatively, phosphorylates PP-InsP5 at position 1, produced by IP6Ks from InsP6, to produce (PP)2-InsP4. Activated when cells are exposed to hyperosmotic stress. The polypeptide is Inositol hexakisphosphate and diphosphoinositol-pentakisphosphate kinase 1 (Mus musculus (Mouse)).